Here is a 384-residue protein sequence, read N- to C-terminus: Galactokinase (384 aa).

34–37 lines the substrate pocket; sequence EHTD. 123–129 is a binding site for ATP; it reads SSGLSSS. Mg(2+) is bound by residues Ser129 and Glu161. Catalysis depends on Asp173, which acts as the Proton acceptor. Residue Tyr222 participates in substrate binding.

This sequence belongs to the GHMP kinase family. GalK subfamily.

It localises to the cytoplasm. The enzyme catalyses alpha-D-galactose + ATP = alpha-D-galactose 1-phosphate + ADP + H(+). It participates in carbohydrate metabolism; galactose metabolism. Functionally, catalyzes the transfer of the gamma-phosphate of ATP to D-galactose to form alpha-D-galactose-1-phosphate (Gal-1-P). This chain is Galactokinase, found in Actinobacillus pleuropneumoniae serotype 3 (strain JL03).